The sequence spans 266 residues: Tryptophan synthase alpha chain (266 aa).

Active-site proton acceptor residues include E46 and D57.

This sequence belongs to the TrpA family. Tetramer of two alpha and two beta chains.

The enzyme catalyses (1S,2R)-1-C-(indol-3-yl)glycerol 3-phosphate + L-serine = D-glyceraldehyde 3-phosphate + L-tryptophan + H2O. The protein operates within amino-acid biosynthesis; L-tryptophan biosynthesis; L-tryptophan from chorismate: step 5/5. In terms of biological role, the alpha subunit is responsible for the aldol cleavage of indoleglycerol phosphate to indole and glyceraldehyde 3-phosphate. The sequence is that of Tryptophan synthase alpha chain from Lacticaseibacillus casei (Lactobacillus casei).